The primary structure comprises 211 residues: Protein-methionine-sulfoxide reductase heme-binding subunit MsrQ (211 aa).

5 consecutive transmembrane segments (helical) span residues 10 to 30 (WLKV…AWAI), 82 to 102 (LWCF…ELGV), 116 to 136 (PYLT…FTST), 153 to 173 (FVYL…KIIS), and 178 to 198 (IYAG…LSLF).

Belongs to the MsrQ family. In terms of assembly, heterodimer of a catalytic subunit (MsrP) and a heme-binding subunit (MsrQ). Requires FMN as cofactor. Heme b is required as a cofactor.

Its subcellular location is the cell inner membrane. Part of the MsrPQ system that repairs oxidized periplasmic proteins containing methionine sulfoxide residues (Met-O), using respiratory chain electrons. Thus protects these proteins from oxidative-stress damage caused by reactive species of oxygen and chlorine generated by the host defense mechanisms. MsrPQ is essential for the maintenance of envelope integrity under bleach stress, rescuing a wide series of structurally unrelated periplasmic proteins from methionine oxidation, including the primary periplasmic chaperone SurA and the lipoprotein Pal. MsrQ provides electrons for reduction to the reductase catalytic subunit MsrP, using the quinone pool of the respiratory chain. This is Protein-methionine-sulfoxide reductase heme-binding subunit MsrQ from Escherichia coli (strain UTI89 / UPEC).